Here is a 280-residue protein sequence, read N- to C-terminus: Energy-coupling factor transporter ATP-binding protein EcfA2 (280 aa).

Residues 3–245 enclose the ABC transporter domain; the sequence is INLQNVSYTY…VSLLEKKQLG (243 aa). An ATP-binding site is contributed by 40–47; sequence GHTGSGKS.

This sequence belongs to the ABC transporter superfamily. Energy-coupling factor EcfA family. Forms a stable energy-coupling factor (ECF) transporter complex composed of 2 membrane-embedded substrate-binding proteins (S component), 2 ATP-binding proteins (A component) and 2 transmembrane proteins (T component).

It localises to the cell membrane. In terms of biological role, ATP-binding (A) component of a common energy-coupling factor (ECF) ABC-transporter complex. Unlike classic ABC transporters this ECF transporter provides the energy necessary to transport a number of different substrates. This chain is Energy-coupling factor transporter ATP-binding protein EcfA2, found in Streptococcus pyogenes serotype M3 (strain ATCC BAA-595 / MGAS315).